Here is a 193-residue protein sequence, read N- to C-terminus: Peptidyl-tRNA hydrolase (193 aa).

Position 16 (Tyr16) interacts with tRNA. His21 serves as the catalytic Proton acceptor. Phe67, Asn69, and Asn115 together coordinate tRNA.

It belongs to the PTH family. As to quaternary structure, monomer.

Its subcellular location is the cytoplasm. It carries out the reaction an N-acyl-L-alpha-aminoacyl-tRNA + H2O = an N-acyl-L-amino acid + a tRNA + H(+). Its function is as follows. Hydrolyzes ribosome-free peptidyl-tRNAs (with 1 or more amino acids incorporated), which drop off the ribosome during protein synthesis, or as a result of ribosome stalling. In terms of biological role, catalyzes the release of premature peptidyl moieties from peptidyl-tRNA molecules trapped in stalled 50S ribosomal subunits, and thus maintains levels of free tRNAs and 50S ribosomes. In Psychrobacter arcticus (strain DSM 17307 / VKM B-2377 / 273-4), this protein is Peptidyl-tRNA hydrolase.